Here is a 203-residue protein sequence, read N- to C-terminus: CCG-binding protein 1 (203 aa).

The disordered stretch occupies residues 156 to 178 (IPDGLPKSEQELEEEEKSKMPDS). The span at 161–175 (PKSEQELEEEEKSKM) shows a compositional bias: basic and acidic residues.

In terms of assembly, homotetramer. Interacts with MEE12/CCG, MED7A, MED7B, MED9, AGL49, AGL53, AGL75, AGL80, AGL81, AGL82, AGL103 and NRPB1 (via CTD). As to expression, expressed in roots, leaves, stems and flowers. Expressed in the central cell of mature ovules.

The protein resides in the nucleus. It is found in the cytoplasm. Functionally, required for the development of the one-cell zygote and endosperm in embryos. Required for micropylar pollen tube guidance, but has no effect on ovule development and gametophytic cell fate specification. May connect transcription factors and the Pol II machinery to regulate pollen tube attraction, via its interactions with AGAMOUS-like (AGL) transcription factors, MEE14/CCG and the Mediator complex. This chain is CCG-binding protein 1, found in Arabidopsis thaliana (Mouse-ear cress).